A 49-amino-acid polypeptide reads, in one-letter code: Large ribosomal subunit protein bL33A (49 aa).

It belongs to the bacterial ribosomal protein bL33 family.

The polypeptide is Large ribosomal subunit protein bL33A (Staphylococcus saprophyticus subsp. saprophyticus (strain ATCC 15305 / DSM 20229 / NCIMB 8711 / NCTC 7292 / S-41)).